A 361-amino-acid polypeptide reads, in one-letter code: Isopentenyl-diphosphate delta-isomerase (361 aa).

A substrate-binding site is contributed by 12 to 13 (RK). FMN is bound by residues S70, 71-73 (SMT), S101, and N130. Position 101–103 (101–103 (SMR)) interacts with substrate. Substrate is bound at residue Q165. Mg(2+) is bound at residue E166. Residues K197 and 310-311 (AG) each bind FMN.

The protein belongs to the IPP isomerase type 2 family. In terms of assembly, homooctamer. Dimer of tetramers. FMN is required as a cofactor. The cofactor is NADPH. Requires Mg(2+) as cofactor.

The protein resides in the cytoplasm. It catalyses the reaction isopentenyl diphosphate = dimethylallyl diphosphate. In terms of biological role, involved in the biosynthesis of isoprenoids. Catalyzes the 1,3-allylic rearrangement of the homoallylic substrate isopentenyl (IPP) to its allylic isomer, dimethylallyl diphosphate (DMAPP). This chain is Isopentenyl-diphosphate delta-isomerase, found in Chlorobium luteolum (strain DSM 273 / BCRC 81028 / 2530) (Pelodictyon luteolum).